The sequence spans 208 residues: Glutathione S-transferase F6 (208 aa).

The region spanning 2 to 83 (AGIKVFGHPA…YIAHEFSDKG (82 aa)) is the GST N-terminal domain. Glutathione-binding positions include 12 to 13 (ST), 41 to 42 (HK), 54 to 55 (KV), and 67 to 68 (ES). In terms of domain architecture, GST C-terminal spans 89 to 208 (TGKDMAIIAM…TSRPSAQKVL (120 aa)).

The protein belongs to the GST superfamily. Phi family.

Its subcellular location is the cytoplasm. The protein resides in the cytosol. It carries out the reaction RX + glutathione = an S-substituted glutathione + a halide anion + H(+). In terms of biological role, involved in camalexin biosynthesis by probably catalyzing the conjugation of GSH with indole-3-acetonitrile (IAN). May be involved in the conjugation of reduced glutathione to a wide number of exogenous and endogenous hydrophobic electrophiles and have a detoxification role against certain herbicides. In Arabidopsis thaliana (Mouse-ear cress), this protein is Glutathione S-transferase F6 (GSTF6).